The sequence spans 244 residues: Uridylate kinase (244 aa).

12–15 provides a ligand contact to ATP; that stretch reads KLSG. Residues 20-25 are involved in allosteric activation by GTP; the sequence is GERGVG. Gly54 is a UMP binding site. Residues Gly55 and Arg59 each coordinate ATP. UMP contacts are provided by residues Asp74 and 135–142; that span reads IGSPYFST. ATP is bound by residues Asn163, Tyr169, and Asp172.

The protein belongs to the UMP kinase family. Homohexamer.

It localises to the cytoplasm. It carries out the reaction UMP + ATP = UDP + ADP. It functions in the pathway pyrimidine metabolism; CTP biosynthesis via de novo pathway; UDP from UMP (UMPK route): step 1/1. Allosterically activated by GTP. Inhibited by UTP. Its function is as follows. Catalyzes the reversible phosphorylation of UMP to UDP. The protein is Uridylate kinase of Streptococcus suis (strain 98HAH33).